The following is a 77-amino-acid chain: Acyl carrier protein (77 aa).

A Carrier domain is found at Ser-2–Gln-77. The residue at position 37 (Ser-37) is an O-(pantetheine 4'-phosphoryl)serine.

Belongs to the acyl carrier protein (ACP) family. 4'-phosphopantetheine is transferred from CoA to a specific serine of apo-ACP by AcpS. This modification is essential for activity because fatty acids are bound in thioester linkage to the sulfhydryl of the prosthetic group.

The protein localises to the cytoplasm. Its pathway is lipid metabolism; fatty acid biosynthesis. Functionally, carrier of the growing fatty acid chain in fatty acid biosynthesis. This chain is Acyl carrier protein, found in Shewanella denitrificans (strain OS217 / ATCC BAA-1090 / DSM 15013).